The sequence spans 115 residues: NADH-ubiquinone oxidoreductase chain 3 (115 aa).

Helical transmembrane passes span 3–23 (FVLILMTNTLLALLLMIITFW), 55–75 (FFLVAITFLLFDLEIALLLPL), and 84–104 (LPLMVTSSLLLITILALSLAY).

It belongs to the complex I subunit 3 family. In terms of assembly, core subunit of respiratory chain NADH dehydrogenase (Complex I) which is composed of 45 different subunits. Interacts with TMEM186. Interacts with TMEM242.

The protein localises to the mitochondrion inner membrane. The enzyme catalyses a ubiquinone + NADH + 5 H(+)(in) = a ubiquinol + NAD(+) + 4 H(+)(out). Functionally, core subunit of the mitochondrial membrane respiratory chain NADH dehydrogenase (Complex I) which catalyzes electron transfer from NADH through the respiratory chain, using ubiquinone as an electron acceptor. Essential for the catalytic activity of complex I. In Pan troglodytes (Chimpanzee), this protein is NADH-ubiquinone oxidoreductase chain 3.